The chain runs to 456 residues: MLHLYNSLTRKKEPFVSLRPGKIGMYVCGITVYDHCHLGHARSMVAFDVMVRYLRSQGFDVTYVRNITDIDDKIIARASERGVSIDELTAQYIDAMNNDTHALNILPPDHEPRATGHIETIIRLIQRLLEKGNAYVSDNGDVCYEVDTFPEYGKLSHKDIEGLVSGSRVEIVKEKRSPLDFVLWKKAKPGEPSWPSPWGEGRPGWHIECSAMAMHELGEQFDIHGGGLDLQFPHHENEIAQSEAATGKPFANYWLHVGMLQVNGEKMAKSIGNFYTIADVLKEHHPEVIRYFLLSSHYRSPLNYSEENLLNAKKALIRLYQAVKDVPPQTADSKLDEYWQEQFNQAMNDDFNTPVALSVLFQLAHEVNKSNSPALAHTLKNLAGILGFLQKDPESFLQSGLAEEEKLVIEQLIAERLQARAERNWAKADQIRADLLSKGIELEDGATGTTWRRIAE.

Cys-28 contributes to the Zn(2+) binding site. A 'HIGH' region motif is present at residues 30 to 40 (ITVYDHCHLGH). Zn(2+) contacts are provided by Cys-209, His-234, and Glu-238. The short motif at 266 to 270 (KMAKS) is the 'KMSKS' region element. ATP is bound at residue Lys-269.

Belongs to the class-I aminoacyl-tRNA synthetase family. As to quaternary structure, monomer. It depends on Zn(2+) as a cofactor.

It localises to the cytoplasm. The enzyme catalyses tRNA(Cys) + L-cysteine + ATP = L-cysteinyl-tRNA(Cys) + AMP + diphosphate. This Legionella pneumophila (strain Paris) protein is Cysteine--tRNA ligase.